Here is a 475-residue protein sequence, read N- to C-terminus: Vasculin-like protein 1 (475 aa).

A phosphoserine mark is found at S49 and S76. Disordered regions lie at residues 92–115 and 160–191; these read NLSG…GSTG and PSLN…SAKQ. S202 carries the post-translational modification Phosphoserine. 2 disordered regions span residues 237–271 and 292–318; these read LVPK…EAAL and PKES…RRTT. Low complexity predominate over residues 294–311; sequence ESPSSTTPPIEISSSRLT. T300 bears the Phosphothreonine mark. At S383 the chain carries Phosphoserine. A disordered region spans residues 456–475; that stretch reads CEDSDTETSSSETSDDDAWK.

Belongs to the vasculin family.

The protein localises to the nucleus. In terms of biological role, possible transcription factor. This is Vasculin-like protein 1 (Gpbp1l1) from Rattus norvegicus (Rat).